The sequence spans 442 residues: Protein trichome birefringence-like 26 (442 aa).

The helical; Signal-anchor for type II membrane protein transmembrane segment at 51–71 threads the bilayer; sequence FFLYFSLVALAYYFIISSLAV. A GDS motif motif is present at residues 164–166; the sequence is GDS. A DCXHWCLPGXXDXWN motif motif is present at residues 409–423; the sequence is DCLHWCLPGPIDSWN.

It belongs to the PC-esterase family. TBL subfamily.

It is found in the membrane. Functionally, may be involved in the O-acetylation of mannan. May act as a bridging protein that binds pectin and other cell wall polysaccharides. Probably involved in maintaining esterification of pectins. This Arabidopsis thaliana (Mouse-ear cress) protein is Protein trichome birefringence-like 26 (TBL26).